The sequence spans 210 residues: Cuticle collagen 2C (210 aa).

The segment at 11–210 is disordered; sequence CTGGQAGPPG…GVFFEDGTRR (200 aa). Composition is skewed to pro residues over residues 40 to 76 and 88 to 103; these read PGRPPVQPCDPIPIPPCKPCPQGRPGPPGPIGPPGEP and DAPPGPPGPKGPPGPP. Low complexity predominate over residues 105–122; that stretch reads KAGAPGAAGQPGANAPSE. A compositionally biased stretch (pro residues) spans 123 to 144; that stretch reads PLVPGPPGPPGPTGPEGPPGPN. Residues 167-179 show a composition bias toward low complexity; sequence HPGAPGNAGHPGQ.

This sequence belongs to the cuticular collagen family.

Its function is as follows. Nematode cuticles are composed largely of collagen-like proteins. The cuticle functions both as an exoskeleton and as a barrier to protect the worm from its environment. The chain is Cuticle collagen 2C (2C) from Haemonchus contortus (Barber pole worm).